The sequence spans 196 residues: Imidazole glycerol phosphate synthase subunit HisH (196 aa).

Residues 2–196 (NVVIVDTECA…LKRFLELTLC (195 aa)) enclose the Glutamine amidotransferase type-1 domain. The active-site Nucleophile is C77. Residues H175 and E177 contribute to the active site.

In terms of assembly, heterodimer of HisH and HisF.

Its subcellular location is the cytoplasm. The enzyme catalyses 5-[(5-phospho-1-deoxy-D-ribulos-1-ylimino)methylamino]-1-(5-phospho-beta-D-ribosyl)imidazole-4-carboxamide + L-glutamine = D-erythro-1-(imidazol-4-yl)glycerol 3-phosphate + 5-amino-1-(5-phospho-beta-D-ribosyl)imidazole-4-carboxamide + L-glutamate + H(+). It catalyses the reaction L-glutamine + H2O = L-glutamate + NH4(+). Its pathway is amino-acid biosynthesis; L-histidine biosynthesis; L-histidine from 5-phospho-alpha-D-ribose 1-diphosphate: step 5/9. Its function is as follows. IGPS catalyzes the conversion of PRFAR and glutamine to IGP, AICAR and glutamate. The HisH subunit catalyzes the hydrolysis of glutamine to glutamate and ammonia as part of the synthesis of IGP and AICAR. The resulting ammonia molecule is channeled to the active site of HisF. This is Imidazole glycerol phosphate synthase subunit HisH from Idiomarina loihiensis (strain ATCC BAA-735 / DSM 15497 / L2-TR).